We begin with the raw amino-acid sequence, 557 residues long: MVHRLPVFKRYMGNTPQKKAVFGQCRGLPCVAPLLTTVEEAPRGISARVRGHFPKWLNGSLLRTGPGKFEFGKDKYNHWFDGMALLHQFRMAKGTVTYRSKFLQSDTYKANSAKNRIVISEFGTLALPDPCKNVFERFMSRFELPGKAAAMTDNTNVNYVRYKGDYYLCTETNFMNKVDIETLEKTEKVDWSKFIAVNGATAHPHYDPDGTAYNMGNSFGPYGFSYKVIRVPPEKVDLGETIHGAQVICSIASTEKGKPSYYHSFGMTRNYIIFIEQPLKMNLWKIATSKIRGKAFSDGISWEPQCNTWFHVVDKRTGQLLPGRYYSKPFVTFHQINAFEDQGCVIIDLCCQDNGRTLEVYQLQNLRKAGEGLDQVYNSAAKSFPRRFVLPLNVSLNAPEGDNLSPLSYTSASAVKQADGTIWCSHENLHQEDLEKEGGIEFPQIYYDQFSGKKYHFFYGCGFRHLVGGDSLIKVDVVNKTLKVWREDGFYPSEPVFVPAPGTNEEDGGVILSVVITPNQNESNFLLVLDAKNFGELGRAEVPVQMPYGFHGTFIPI.

H203, H263, H334, and H551 together coordinate Fe cation.

The protein belongs to the carotenoid oxygenase family. The cofactor is Fe(2+).

The protein localises to the mitochondrion. It carries out the reaction all-trans-beta-carotene + O2 = beta-ionone + all-trans-10'-apo-beta-carotenal. The catalysed reaction is 5-cis-lycopene + O2 = 5-cis-10'-apo-lycopenal + (3E,5E)-6,10-dimethylundeca-3,5,9-trien-2-one. It catalyses the reaction 13-cis-lycopene + O2 = 13-cis-10'-apo-lycopenal + (3E,5E)-6,10-dimethylundeca-3,5,9-trien-2-one. The enzyme catalyses lutein + O2 = (3R,6R)-hydroxy-alpha-ionone + (3R)-3-hydroxy-10'-apo-beta-carotenal. It carries out the reaction lutein + O2 = (3R,6R)-3-hydroxy-10'-apo-alpha-carotenal + (3R)-hydroxy-beta-ionone. The catalysed reaction is all-trans-zeaxanthin + 2 O2 = 4,9-dimethyldodeca-2,4,6,8,10-pentaenedial + 2 (3R)-hydroxy-beta-ionone. It catalyses the reaction all-trans-zeaxanthin + O2 = (3R)-3-hydroxy-10'-apo-beta-carotenal + (3R)-hydroxy-beta-ionone. The enzyme catalyses beta-cryptoxanthin + O2 = all-trans-10'-apo-beta-carotenal + (3R)-hydroxy-beta-ionone. It carries out the reaction all-trans-10'-apo-beta-carotenal + O2 = beta-ionone + 4,9-dimethyldodeca-2,4,6,8,10-pentaenedial. The catalysed reaction is (3R)-3-hydroxy-10'-apo-beta-carotenal + O2 = 4,9-dimethyldodeca-2,4,6,8,10-pentaenedial + (3R)-hydroxy-beta-ionone. It catalyses the reaction (3R,6R)-3-hydroxy-10'-apo-alpha-carotenal + O2 = (3R,6R)-hydroxy-alpha-ionone + 4,9-dimethyldodeca-2,4,6,8,10-pentaenedial. In terms of biological role, broad specificity mitochondrial dioxygenase that mediates the asymmetric oxidative cleavage of carotenoids. Cleaves carotenes (pure hydrocarbon carotenoids) such as all-trans-beta-carotene and lycopene as well as xanthophylls (oxygenated carotenoids) such as zeaxanthin, lutein and beta-cryptoxanthin at both the 9,10 and the 9',10' carbon-carbon double bond. Through its function in carotenoids metabolism regulates oxidative stress and the production of important signaling molecules. The chain is Carotenoid-cleaving dioxygenase, mitochondrial from Pongo abelii (Sumatran orangutan).